Here is a 142-residue protein sequence, read N- to C-terminus: Small ribosomal subunit protein uS12y (142 aa).

Proline 61 is subject to Hydroxyproline.

This sequence belongs to the universal ribosomal protein uS12 family.

This chain is Small ribosomal subunit protein uS12y (RPS23B), found in Arabidopsis thaliana (Mouse-ear cress).